A 194-amino-acid chain; its full sequence is Interleukin-17C (194 aa).

An N-terminal signal peptide occupies residues methionine 1–glutamine 16. Cystine bridges form between cysteine 125–cysteine 185 and cysteine 130–cysteine 187.

Belongs to the IL-17 family. Binds to a heterodimer formed by IL17RA and IL17RE. In terms of tissue distribution, expressed by epithelial cells after bacterial challenge. Low expression, if any, in lymphocytes.

The protein localises to the secreted. Cytokine that plays a crucial role in innate immunity of the epithelium, including to intestinal bacterial pathogens, in an autocrine manner. Stimulates the production of antibacterial peptides and pro-inflammatory molecules for host defense by signaling through the NFKB and MAPK pathways. Acts synergically with IL22, TNF and IL1B in inducing antibacterial peptides. May have protective function by maintaining epithelial homeostasis after an inflammatory challenge, such as that caused in the intestine by dextran sulfate sodium in a colitis model. May also promote an inflammatory phenotype, such as skin in a psoriasis model. Enhanced IL17C/IL17RE signaling may also lead to greater susceptibility to autoimmune diseases, such as autoimmune encephalitis. In Mus musculus (Mouse), this protein is Interleukin-17C (Il17c).